We begin with the raw amino-acid sequence, 201 residues long: MELVIKDVPSLLSVSEIIFGRDFNEALIHQVVVAYSASTRQGTRAQKSRADVSGSGRKPWRQKGTGRARAGSFRSPIWRSGGVTFASKPQSHSQKINKKMYRGALKSIFSELIRQKRLIIFEKFSLDLPKTNLLVKKLKEIKLNNVLILTKEIENNLFLASRNLYSVDVKDVCSMDPVSLIAFEHIIITVAALKKVEEMLS.

Positions 44 to 68 are disordered; the sequence is RAQKSRADVSGSGRKPWRQKGTGRA.

The protein belongs to the universal ribosomal protein uL4 family. As to quaternary structure, part of the 50S ribosomal subunit.

Its function is as follows. One of the primary rRNA binding proteins, this protein initially binds near the 5'-end of the 23S rRNA. It is important during the early stages of 50S assembly. It makes multiple contacts with different domains of the 23S rRNA in the assembled 50S subunit and ribosome. Forms part of the polypeptide exit tunnel. This chain is Large ribosomal subunit protein uL4, found in Buchnera aphidicola subsp. Schizaphis graminum (strain Sg).